The sequence spans 185 residues: Testis development-related protein (185 aa).

2 disordered regions span residues 1 to 29 (MWKL…PPAA) and 121 to 156 (ADPE…ANSS).

This sequence belongs to the TDRP family. Interacts with PRM2. Expressed in spermatogenic cells, especially in spermatocytes (at protein level).

The protein resides in the nucleus. It is found in the cytoplasm. Its function is as follows. Contributes to normal sperm motility, but not essential for male fertility. In Homo sapiens (Human), this protein is Testis development-related protein (TDRP).